The primary structure comprises 244 residues: NAD(P)H-hydrate epimerase (244 aa).

Positions 35 to 240 (IREIDSLAME…SIGVPLELLR (206 aa)) constitute a YjeF N-terminal domain. 82–86 (NNGGD) lines the (6S)-NADPHX pocket. Positions 83 and 150 each coordinate K(+). (6S)-NADPHX is bound by residues 154–160 (GTGAKPP), Tyr165, and Asp183. Thr186 is a K(+) binding site.

This sequence belongs to the NnrE/AIBP family. K(+) is required as a cofactor.

It carries out the reaction (6R)-NADHX = (6S)-NADHX. The enzyme catalyses (6R)-NADPHX = (6S)-NADPHX. Functionally, catalyzes the epimerization of the S- and R-forms of NAD(P)HX, a damaged form of NAD(P)H that is a result of enzymatic or heat-dependent hydration. This is a prerequisite for the S-specific NAD(P)H-hydrate dehydratase to allow the repair of both epimers of NAD(P)HX. The chain is NAD(P)H-hydrate epimerase from Rhodopirellula baltica (strain DSM 10527 / NCIMB 13988 / SH1).